The chain runs to 331 residues: Cathepsin 7 (331 aa).

The signal sequence occupies residues 1-17; it reads MTPTVFLSILCLGVALA. A propeptide spans 18 to 111 (activation peptide); the sequence is APAPDYNLDA…GKHIQKRNPK (94 aa). The Nuclear localization signal motif lies at 33–50; that stretch reads KRSNDRTYSPEEEKQRRA. A glycan (N-linked (GlcNAc...) asparagine) is linked at asparagine 72. Disulfide bonds link cysteine 133–cysteine 176, cysteine 167–cysteine 209, and cysteine 267–cysteine 320. Residue cysteine 136 is part of the active site. Residues histidine 274 and asparagine 298 contribute to the active site.

It belongs to the peptidase C1 family. In terms of tissue distribution, expressed in placenta. Expressed in parietal and spiral artery-associated trophoblast giant cells, most abundantly during the phase of trophoblast invasion. From 14.5 dpc onwards, expressed at lower levels in labyrinth trophoblast cells. Expressed in trophoblast stem cells. Expressed in heart, liver and testis.

It is found in the endosome. The protein resides in the lysosome. It localises to the cytoplasm. The protein localises to the perinuclear region. Its subcellular location is the golgi apparatus. It is found in the nucleus. The protein resides in the secreted. It localises to the extracellular space. Its function is as follows. Involved in trophoblast cell proliferation and differentiation probably by affecting mitotic cell cycle progression. Proteolytic activity and nuclear localization are essential for its role in cell cycle progression. The sequence is that of Cathepsin 7 from Mus musculus (Mouse).